The primary structure comprises 282 residues: Protein-glutamine deamidase Cif (282 aa).

The interval 1 to 16 (MKDITLPPPTSASCLT) is translocation domain (TD). Catalysis depends on residues C109, H165, and Q185.

This sequence belongs to the Cif family.

Its subcellular location is the secreted. It localises to the host nucleus. The catalysed reaction is L-glutaminyl-[protein] + H2O = L-glutamyl-[protein] + NH4(+). Functionally, protein-glutamine deamidase effector that inhibits the host cell cycle and other key cellular processes such as the actin network and programmed-cell death. Acts by mediating the side chain deamidation of 'Gln-40' of host NEDD8, converting it to glutamate, thereby abolishing the activity of cullin-RING-based E3 ubiquitin-protein ligase complexes (CRL complexes). Inactivation of CRL complexes prevents ubiquitination and subsequent degradation of the cyclin-dependent kinase inhibitors CDKN1A/p21 and CDKN1B/p27, leading to G1 and G2 cell cycle arrests in host cells. Also able to catalyze deamidation of 'Gln-40' of host ubiquitin in vitro; however, NEDD8 constitutes the preferred substrate in vivo. The polypeptide is Protein-glutamine deamidase Cif (Escherichia coli).